A 903-amino-acid polypeptide reads, in one-letter code: MGTMRLFLLAVLFLFSFARAGCDPKIVNIGAVLSTKKHEQIFREAVNQANKRHFTRKIQLNATSVTHRPNAIQMALSVCEDLISSQVYAILVSHPPAPTDHLTPTPISYTAGFYRIPVIGLTTRMSIYSDKSIHLSFLRTVPPYSHQALVWFEMMRLFNWNHVILIVSDDHEGRAAQKKLETLLEEKESKADKVLQFEPGTKNLTALLLEAKELEARVIILSASEDDATAVYKSAAMLDMTGAGYVWLVGEREISGSALRYAPDGIIGLQLINGKNESAHISDAVAVVAQAIHELFEMENITDPPRGCVGNTNIWKTGPLFKRVLMSSKYPDGVTGRIEFNEDGDRKFANYSIMNLQNRKLVQVGIFNGSYIIQNDRKIIWPGGETERPQGYQMSTRLKIVTIHQEPFVYVRPTTSDGTCREEYTINGDPIKKVICNGPNETIPGRPTVPQCCYGFCVDLLIKLAREMNFTYEVHLVADGKFGTQERVNNSNKKEWNGMMGELLSGQADMIVAPLTINNERAQYIEFSKPFKYQGLTILVKKEIPRSTLDSFMQPFQSTLWLLVGLSVHVVAVMLYLLDRFSPFGRFKVNSEEEEEDALTLSSAMWFSWGVLLNSGIGEGAPRSFSARILGMVWAGFAMIIVASYTANLAAFLVLDRPEERITGINDPRLRNPSDKFIYATVKQSSVDIYFRRQVELSTMYRHMEKHNYESAAEAIQAVRDNKLHAFIWDSAVLEFEASQKCDLVTTGELFFRSGFGIGMRKDSPWKQNVSLNILKSHENGFMEELDKTWVRYQECDSRSNAPATLTFENMAGVFMLVAGGIVAGIFLIFIEIAYKRHKDARRKQMQLAFAAVNVWRKNLQDRKSGRAEPDPKKKASFRSITSTLASSFKRRRSSKDTVNVVV.

An N-terminal signal peptide occupies residues 1–20; the sequence is MGTMRLFLLAVLFLFSFARA. Over 21–557 the chain is Extracellular; sequence GCDPKIVNIG…TLDSFMQPFQ (537 aa). 9 N-linked (GlcNAc...) asparagine glycosylation sites follow: N61, N203, N276, N300, N350, N368, N440, N469, and N489. C79 and C308 form a disulfide bridge. Disulfide bonds link C420–C452 and C436–C453. Glycine is bound by residues P514, T516, and R521. The helical transmembrane segment at 558 to 578 threads the bilayer; sequence STLWLLVGLSVHVVAVMLYLL. Residues 579-600 lie on the Cytoplasmic side of the membrane; that stretch reads DRFSPFGRFKVNSEEEEEDALT. Residues 601 to 620 are pore-forming; that stretch reads LSSAMWFSWGVLLNSGIGEG. Residues 601–622 constitute an intramembrane region (discontinuously helical); the sequence is LSSAMWFSWGVLLNSGIGEGAP. The Cytoplasmic portion of the chain corresponds to 623–628; sequence RSFSAR. A helical membrane pass occupies residues 629-645; sequence ILGMVWAGFAMIIVASY. Topologically, residues 646–810 are extracellular; that stretch reads TANLAAFLVL…NAPATLTFEN (165 aa). Residues S686 and D730 each contribute to the glycine site. A disulfide bridge links C742 with C796. Residue N769 is glycosylated (N-linked (GlcNAc...) asparagine). A helical transmembrane segment spans residues 811-831; the sequence is MAGVFMLVAGGIVAGIFLIFI. Over 832-903 the chain is Cytoplasmic; the sequence is EIAYKRHKDA…SSKDTVNVVV (72 aa).

Belongs to the glutamate-gated ion channel (TC 1.A.10.1) family. NR1/GRIN1 subfamily. In terms of assembly, heterotetramer; the NMDAR subunits are modular and harbor tiered domains that function in concert to regulate opening and closing of the cation-selective ion channel pore. Forms heterotetrameric channels composed of two GluN1/zeta subunits (GRIN1), and two identical GluN2/epsilon subunits (GRIN2A, GRIN2B, GRIN2C or GRIN2D) or GluN3 subunits (GRIN3A or GRIN3B) (in vitro). Does not form functional channels by itself. Can also form heterotetrameric channels that contain at least two GluN1 subunits and at least two different GluN2 subunits (or a combination of one GluN2 and one GluN3 subunits) (in vitro). In vivo, the subunit composition may vary in function of the expression levels of the different subunits.

Its subcellular location is the cell membrane. It is found in the postsynaptic cell membrane. It localises to the postsynaptic density membrane. The protein localises to the synaptic cell membrane. The catalysed reaction is Ca(2+)(in) = Ca(2+)(out). It catalyses the reaction Na(+)(in) = Na(+)(out). The enzyme catalyses K(+)(in) = K(+)(out). With respect to regulation, NMDA glutamate receptor activity is modulated by zinc ions. The NMDA glutamate receptor activity of the heterotetramer with grin2b is stimulated by micromolar levels of Zn(2+). The NMDA glutamate receptor activity of the heterotetramer with grin2a is inhibited by nanomolar levels of Zn(2+). In terms of biological role, component of N-methyl-D-aspartate (NMDA) receptors (NMDARs) that function as heterotetrameric, ligand-gated cation channels with high calcium permeability and voltage-dependent block by Mg(2+). NMDARs participate in synaptic plasticity. Channel activation requires binding of the neurotransmitter L-glutamate to the GluN2 subunit, glycine binding to the GluN1 subunit, plus membrane depolarization to eliminate channel inhibition by Mg(2+). NMDARs mediate simultaneously the potasium efflux and the influx of calcium and sodium. Each GluN2 or GluN3 subunit confers differential attributes to channel properties, including activation, deactivation and desensitization kinetics, pH sensitivity, Ca2(+) permeability, and binding to allosteric modulators. The sequence is that of Glutamate receptor ionotropic, NMDA 1 from Xenopus laevis (African clawed frog).